The primary structure comprises 724 residues: Actin-related protein 5 (724 aa).

Disordered regions lie at residues 358–391 (QSLR…LMNV), 412–450 (TTAE…ESYL), and 467–488 (KKRL…IGRG). Residues 414 to 446 (AEGRLRARQKRNEEELEKEKRNQLEEERRRENP) show a composition bias toward basic and acidic residues. Residue serine 542 is modified to Phosphoserine.

The protein belongs to the actin family. ARP5 subfamily. As to quaternary structure, component of the INO80 chromatin-remodeling complex. Interacts with EEN. In terms of tissue distribution, expressed ubiquitously in seedlings, roots, leaves, buds, flowers and siliques.

It is found in the nucleus. The protein localises to the nucleoplasm. The protein resides in the cytoplasm. Probable subunit of a chromatin-remodeling complex. Involved in DNA repair. Required for multicellular development of all organs. This is Actin-related protein 5 from Arabidopsis thaliana (Mouse-ear cress).